Here is a 439-residue protein sequence, read N- to C-terminus: Chitinase-like protein Idgf1 (439 aa).

Residues Met1–Ala20 form the signal peptide. One can recognise a GH18 domain in the interval Ser22–Gly439. The cysteines at positions 26 and 53 are disulfide-linked. N-linked (GlcNAc...) asparagine glycans are attached at residues Asn122, Asn218, and Asn346. Cys340 and Cys423 form a disulfide bridge.

The protein belongs to the glycosyl hydrolase 18 family. IDGF subfamily. Primarily expressed in yolk cells and fat body. In larvae, it is expressed in large salivary gland cells and weakly expressed in imaginal disks. Less expressed than Idgf2 and Idgf4.

It is found in the secreted. Functionally, cooperates with insulin-like peptides to stimulate the proliferation, polarization and motility of imaginal disk cells. May act by stabilizing the binding of insulin-like peptides to its receptor through a simultaneous interaction with both molecules to form a multiprotein signaling complex. The polypeptide is Chitinase-like protein Idgf1 (Idgf1) (Drosophila melanogaster (Fruit fly)).